The chain runs to 414 residues: Histidinol dehydrogenase (414 aa).

The NAD(+) site is built by Tyr116, Gln177, and Asn200. Substrate is bound by residues Thr223, Gln245, and His248. 2 residues coordinate Zn(2+): Gln245 and His248. Residues Glu313 and His314 each act as proton acceptor in the active site. Residues His314, Asp347, Glu401, and His406 each coordinate substrate. Zn(2+) is bound at residue Asp347. His406 lines the Zn(2+) pocket.

It belongs to the histidinol dehydrogenase family. The cofactor is Zn(2+).

It catalyses the reaction L-histidinol + 2 NAD(+) + H2O = L-histidine + 2 NADH + 3 H(+). Its pathway is amino-acid biosynthesis; L-histidine biosynthesis; L-histidine from 5-phospho-alpha-D-ribose 1-diphosphate: step 9/9. Catalyzes the sequential NAD-dependent oxidations of L-histidinol to L-histidinaldehyde and then to L-histidine. This is Histidinol dehydrogenase from Staphylococcus epidermidis (strain ATCC 12228 / FDA PCI 1200).